The following is a 505-amino-acid chain: Ookinete surface protein PIMMS43 (505 aa).

The first 24 residues, 1–24, serve as a signal peptide directing secretion; the sequence is MQKRIYVSLFFLVFFLSKISVVLS. The disordered stretch occupies residues 188–221; that stretch reads ERRKKKLDDEQKRQKDLEDTNRKENDEEQSYKKL. The helical transmembrane segment at 485–505 threads the bilayer; it reads SSIYSSIKYFFLLMLFVIYIL.

In terms of assembly, monomer. May form multimers with an unknown protein(s).

It is found in the membrane. Functionally, involved in ookinete evasion of the mosquito complement-like response, oocyst maturation, sporozoite development and infectivity. The sequence is that of Ookinete surface protein PIMMS43 from Plasmodium falciparum (isolate 3D7).